Here is a 283-residue protein sequence, read N- to C-terminus: MITIHRVKDLRAAIRQQRTQGKRIGLVPTMGNLHAGHVSLVKQAKELCDYVVTSIFVNPLQFGANEDLDKYPRTLDADKEKLVAAGNHLLFTPEVSQLYPEGLERHTKVITPGLSELHCGASRPSHFTGVTTVVSMLFNMVQPDVAIFGEKDFQQLAVIRKMTRDLYLPIVIESGPTLRETDGLAMSSRNGYLSAEQRQTAPLLYKLLQESAEQIENGDKDFAAISAEANNRLTKAGFVPDYFNIVNSDTLSPAVPSDSDITILAAAYLGTTRLIDNISVHLG.

Residue 30-37 (MGNLHAGH) coordinates ATP. His37 functions as the Proton donor in the catalytic mechanism. Gln61 contacts (R)-pantoate. Gln61 is a beta-alanine binding site. Residue 149–152 (GEKD) coordinates ATP. Gln155 lines the (R)-pantoate pocket. Residues Leu178 and 186 to 189 (MSSR) contribute to the ATP site.

The protein belongs to the pantothenate synthetase family. In terms of assembly, homodimer.

The protein localises to the cytoplasm. The enzyme catalyses (R)-pantoate + beta-alanine + ATP = (R)-pantothenate + AMP + diphosphate + H(+). It functions in the pathway cofactor biosynthesis; (R)-pantothenate biosynthesis; (R)-pantothenate from (R)-pantoate and beta-alanine: step 1/1. Catalyzes the condensation of pantoate with beta-alanine in an ATP-dependent reaction via a pantoyl-adenylate intermediate. This Hahella chejuensis (strain KCTC 2396) protein is Pantothenate synthetase.